Consider the following 245-residue polypeptide: 2,3-bisphosphoglycerate-dependent phosphoglycerate mutase (245 aa).

Residues 8–15 (RHGQSLWN), 21–22 (TG), arginine 60, 87–90 (ERHY), lysine 98, 114–115 (RR), and 183–184 (GN) each bind substrate. Residue histidine 9 is the Tele-phosphohistidine intermediate of the active site. Catalysis depends on glutamate 87, which acts as the Proton donor/acceptor.

Belongs to the phosphoglycerate mutase family. BPG-dependent PGAM subfamily.

It carries out the reaction (2R)-2-phosphoglycerate = (2R)-3-phosphoglycerate. It functions in the pathway carbohydrate degradation; glycolysis; pyruvate from D-glyceraldehyde 3-phosphate: step 3/5. In terms of biological role, catalyzes the interconversion of 2-phosphoglycerate and 3-phosphoglycerate. In Bacillus cereus (strain B4264), this protein is 2,3-bisphosphoglycerate-dependent phosphoglycerate mutase.